The primary structure comprises 251 residues: Hydroxyacylglutathione hydrolase (251 aa).

Zn(2+)-binding residues include H53, H55, D57, H58, H110, D127, and H165.

This sequence belongs to the metallo-beta-lactamase superfamily. Glyoxalase II family. As to quaternary structure, monomer. It depends on Zn(2+) as a cofactor.

It catalyses the reaction an S-(2-hydroxyacyl)glutathione + H2O = a 2-hydroxy carboxylate + glutathione + H(+). Its pathway is secondary metabolite metabolism; methylglyoxal degradation; (R)-lactate from methylglyoxal: step 2/2. In terms of biological role, thiolesterase that catalyzes the hydrolysis of S-D-lactoyl-glutathione to form glutathione and D-lactic acid. The protein is Hydroxyacylglutathione hydrolase of Escherichia coli O45:K1 (strain S88 / ExPEC).